Here is a 512-residue protein sequence, read N- to C-terminus: Cobyric acid synthase (512 aa).

Residues 251 to 451 form the GATase cobBQ-type domain; that stretch reads ALDITVIRLP…IHGLFDSANF (201 aa). Catalysis depends on Cys332, which acts as the Nucleophile. Residue His443 is part of the active site.

It belongs to the CobB/CobQ family. CobQ subfamily.

It functions in the pathway cofactor biosynthesis; adenosylcobalamin biosynthesis. Functionally, catalyzes amidations at positions B, D, E, and G on adenosylcobyrinic A,C-diamide. NH(2) groups are provided by glutamine, and one molecule of ATP is hydrogenolyzed for each amidation. The polypeptide is Cobyric acid synthase (Photorhabdus laumondii subsp. laumondii (strain DSM 15139 / CIP 105565 / TT01) (Photorhabdus luminescens subsp. laumondii)).